The primary structure comprises 684 residues: Threonine--tRNA ligase (684 aa).

The region spanning 1 to 64 (MTAPNPSSLV…ESDTEVEPVA (64 aa)) is the TGS domain. The segment at 261 to 567 (DHRKLGVELD…LTEHYAGAFP (307 aa)) is catalytic. Zn(2+) is bound by residues Cys-366, His-417, and His-544.

The protein belongs to the class-II aminoacyl-tRNA synthetase family. As to quaternary structure, homodimer. Requires Zn(2+) as cofactor.

It localises to the cytoplasm. The catalysed reaction is tRNA(Thr) + L-threonine + ATP = L-threonyl-tRNA(Thr) + AMP + diphosphate + H(+). Functionally, catalyzes the attachment of threonine to tRNA(Thr) in a two-step reaction: L-threonine is first activated by ATP to form Thr-AMP and then transferred to the acceptor end of tRNA(Thr). Also edits incorrectly charged L-seryl-tRNA(Thr). The chain is Threonine--tRNA ligase from Mycobacteroides abscessus (strain ATCC 19977 / DSM 44196 / CCUG 20993 / CIP 104536 / JCM 13569 / NCTC 13031 / TMC 1543 / L948) (Mycobacterium abscessus).